Reading from the N-terminus, the 281-residue chain is Pantothenate synthetase (281 aa).

30–37 (MGALHHGH) contributes to the ATP binding site. His-37 acts as the Proton donor in catalysis. Gln-61 is a binding site for (R)-pantoate. Gln-61 serves as a coordination point for beta-alanine. 147-150 (GEKD) contributes to the ATP binding site. (R)-pantoate is bound at residue Gln-153. ATP contacts are provided by residues Leu-176 and 184–187 (SSSR).

Belongs to the pantothenate synthetase family. In terms of assembly, homodimer.

It localises to the cytoplasm. It carries out the reaction (R)-pantoate + beta-alanine + ATP = (R)-pantothenate + AMP + diphosphate + H(+). It participates in cofactor biosynthesis; (R)-pantothenate biosynthesis; (R)-pantothenate from (R)-pantoate and beta-alanine: step 1/1. In terms of biological role, catalyzes the condensation of pantoate with beta-alanine in an ATP-dependent reaction via a pantoyl-adenylate intermediate. In Bartonella bacilliformis (strain ATCC 35685 / KC583 / Herrer 020/F12,63), this protein is Pantothenate synthetase.